Here is an 86-residue protein sequence, read N- to C-terminus: Small ribosomal subunit protein bS20 (86 aa).

A disordered region spans residues 1–21 (MANTKSAIKAARKSLRLHDRN).

This sequence belongs to the bacterial ribosomal protein bS20 family.

Binds directly to 16S ribosomal RNA. In Opitutus terrae (strain DSM 11246 / JCM 15787 / PB90-1), this protein is Small ribosomal subunit protein bS20.